Here is a 142-residue protein sequence, read N- to C-terminus: Large ribosomal subunit protein uL11 (142 aa).

This sequence belongs to the universal ribosomal protein uL11 family. In terms of assembly, part of the ribosomal stalk of the 50S ribosomal subunit. Interacts with L10 and the large rRNA to form the base of the stalk. L10 forms an elongated spine to which L12 dimers bind in a sequential fashion forming a multimeric L10(L12)X complex. One or more lysine residues are methylated.

In terms of biological role, forms part of the ribosomal stalk which helps the ribosome interact with GTP-bound translation factors. The sequence is that of Large ribosomal subunit protein uL11 from Pectobacterium atrosepticum (strain SCRI 1043 / ATCC BAA-672) (Erwinia carotovora subsp. atroseptica).